The chain runs to 429 residues: 3-phosphoshikimate 1-carboxyvinyltransferase (429 aa).

3-phosphoshikimate-binding residues include Lys20, Ser21, and Arg25. Lys20 lines the phosphoenolpyruvate pocket. Positions 89 and 118 each coordinate phosphoenolpyruvate. 3-phosphoshikimate-binding residues include Ser164, Ser165, Gln166, Ser192, Asp311, and Lys338. Gln166 is a phosphoenolpyruvate binding site. The Proton acceptor role is filled by Asp311. Phosphoenolpyruvate-binding residues include Arg342 and Arg384.

It belongs to the EPSP synthase family. As to quaternary structure, monomer.

It localises to the cytoplasm. The enzyme catalyses 3-phosphoshikimate + phosphoenolpyruvate = 5-O-(1-carboxyvinyl)-3-phosphoshikimate + phosphate. It functions in the pathway metabolic intermediate biosynthesis; chorismate biosynthesis. Functionally, catalyzes the transfer of the enolpyruvyl moiety of phosphoenolpyruvate (PEP) to the 5-hydroxyl of shikimate-3-phosphate (S3P) to produce enolpyruvyl shikimate-3-phosphate and inorganic phosphate. The protein is 3-phosphoshikimate 1-carboxyvinyltransferase of Methanococcus maripaludis (strain C6 / ATCC BAA-1332).